We begin with the raw amino-acid sequence, 219 residues long: Protein VERNALIZATION 2 (219 aa).

The CCT domain occupies 138-180 (REAKVMRYREKKKRRRYEKQIRYESRKAYAEMRPRVKGRFAKV).

In terms of tissue distribution, mainly expressed in leaves, and at low levels in the shoot apical meristem (SAM).

Its subcellular location is the nucleus. Involved in the regulation of vernalization; this process in essential for flowering in cv. Bd29-1 but seems do not occur in cv. Bd21. The sequence is that of Protein VERNALIZATION 2 from Brachypodium distachyon (Purple false brome).